Here is a 382-residue protein sequence, read N- to C-terminus: UDP-N-acetylglucosamine--N-acetylmuramyl-(pentapeptide) pyrophosphoryl-undecaprenol N-acetylglucosamine transferase (382 aa).

UDP-N-acetyl-alpha-D-glucosamine is bound by residues 11–13 (TGG), Asn-124, Arg-164, Ser-192, and Gln-314.

The protein belongs to the glycosyltransferase 28 family. MurG subfamily.

It localises to the cell membrane. It catalyses the reaction di-trans,octa-cis-undecaprenyl diphospho-N-acetyl-alpha-D-muramoyl-L-alanyl-D-glutamyl-meso-2,6-diaminopimeloyl-D-alanyl-D-alanine + UDP-N-acetyl-alpha-D-glucosamine = di-trans,octa-cis-undecaprenyl diphospho-[N-acetyl-alpha-D-glucosaminyl-(1-&gt;4)]-N-acetyl-alpha-D-muramoyl-L-alanyl-D-glutamyl-meso-2,6-diaminopimeloyl-D-alanyl-D-alanine + UDP + H(+). It participates in cell wall biogenesis; peptidoglycan biosynthesis. In terms of biological role, cell wall formation. Catalyzes the transfer of a GlcNAc subunit on undecaprenyl-pyrophosphoryl-MurNAc-pentapeptide (lipid intermediate I) to form undecaprenyl-pyrophosphoryl-MurNAc-(pentapeptide)GlcNAc (lipid intermediate II). This chain is UDP-N-acetylglucosamine--N-acetylmuramyl-(pentapeptide) pyrophosphoryl-undecaprenol N-acetylglucosamine transferase, found in Deinococcus deserti (strain DSM 17065 / CIP 109153 / LMG 22923 / VCD115).